The following is a 415-amino-acid chain: Ammonium transporter Rh type A (415 aa).

Topologically, residues 1–2 (MR) are cytoplasmic. Residues 3–23 (FIFPTIAVLLEASMIVLFGFF) traverse the membrane as a helical segment. Residues 24 to 51 (VKYETEQNAIQQPNSTNSTKVDRSLELY) are Extracellular-facing. N-linked (GlcNAc...) asparagine glycans are attached at residues asparagine 37 and asparagine 40. A helical transmembrane segment spans residues 52–72 (PLFQDVHVMIFVGFGFLMTFL). At 73 to 76 (KKYG) the chain is on the cytoplasmic side. The helical transmembrane segment at 77–97 (FSSVGINLLIAALGLQWGTFV) threads the bilayer. At 98 to 115 (QGMVHRHGQTIYIGIKNM) the chain is on the extracellular side. Residues 116-136 (INADFSTATVLISFGAVLGKI) traverse the membrane as a helical segment. The Cytoplasmic portion of the chain corresponds to 137–142 (SPTQML). The helical transmembrane segment at 143–163 (IMTIIEITVFAGNEYVVGEIF) threads the bilayer. At 164–167 (QASD) the chain is on the extracellular side. The helical transmembrane segment at 168–188 (IGASMTIHAFGAYFGLAVAGV) threads the bilayer. At 189 to 208 (LYRTGLRKGHEKEESEYHSD) the chain is on the cytoplasmic side. Residues 209–229 (LFAMIGTLFLWMFWPSFNSAI) traverse the membrane as a helical segment. Over 230–236 (AETAEEQ) the chain is Extracellular. The chain crosses the membrane as a helical span at residues 237-257 (YLAIINTYLSLVACVLTAYAM). The Cytoplasmic segment spans residues 258–268 (SSLVGHRGKLD). A helical membrane pass occupies residues 269 to 287 (MVHIQNATLAGGVAVGTCA). Residues 288–290 (DMK) are Extracellular-facing. The chain crosses the membrane as a helical span at residues 291 to 311 (IHPYGSLIIGSIAGMVSVLGF). Residues 312–332 (RFLTPCLTAKLRIHDTCGVHN) are Cytoplasmic-facing. A helical transmembrane segment spans residues 333-353 (LHGLPGVVGGLSSIVAILLGV). The Extracellular segment spans residues 354 to 363 (STASSMTMQA). The chain crosses the membrane as a helical span at residues 364-384 (AALGSSIGSAIAGGLITGLIL). Over 385-415 (RFIVRGQPSKDNFFDDSVYWEVPKEKELDNV) the chain is Cytoplasmic.

It belongs to the ammonium transporter (TC 2.A.49) family. Rh subfamily. In terms of assembly, homodimer. Heterotrimer; a RHCE monomer interacts with a RHAG homodimer. Component of the ankyrin-1 complex in the erythrocyte, composed of ANK1, RHCE, RHAG, SLC4A1, EPB42, GYPA, GYPB and AQP1. Interacts with GYPB (via the N-terminal); this interaction bridges the (RHAG)2(RHCE) heterotrimer with the SLC4A1 Band 3 I dimer complexed with GYPA. In terms of processing, glycosylated.

It localises to the membrane. The catalysed reaction is methylamine(out) = methylamine(in). It carries out the reaction NH4(+)(in) = NH4(+)(out). The enzyme catalyses CO2(out) = CO2(in). In terms of biological role, component of the ankyrin-1 complex, a multiprotein complex involved in the stability and shape of the erythrocyte membrane. Heterotrimer with RHCE (RHAG)2(RHCE), that transports ammonium and its related derivative methylammonium, in both neutral and ionic forms, across the erythrocyte membrane. The transport of NH4(+) is electrogenic and masks the NH3 transport. Also, may act as a CO2 channel. Moreover in erythrocyte, regulates RHD membrane expression and is associated with rhesus blood group antigen expression. The polypeptide is Ammonium transporter Rh type A (Canis lupus familiaris (Dog)).